We begin with the raw amino-acid sequence, 420 residues long: Histidine--tRNA ligase (420 aa).

The protein belongs to the class-II aminoacyl-tRNA synthetase family. In terms of assembly, homodimer.

The protein localises to the cytoplasm. The enzyme catalyses tRNA(His) + L-histidine + ATP = L-histidyl-tRNA(His) + AMP + diphosphate + H(+). In Clostridioides difficile (strain 630) (Peptoclostridium difficile), this protein is Histidine--tRNA ligase.